We begin with the raw amino-acid sequence, 302 residues long: Nucleotide-binding protein Rsph17029_0317 (302 aa).

Position 15–22 (15–22 (GPSGAGRT)) interacts with ATP. 62–65 (DVRN) lines the GTP pocket.

Belongs to the RapZ-like family.

Functionally, displays ATPase and GTPase activities. The chain is Nucleotide-binding protein Rsph17029_0317 from Cereibacter sphaeroides (strain ATCC 17029 / ATH 2.4.9) (Rhodobacter sphaeroides).